We begin with the raw amino-acid sequence, 218 residues long: MSSQQQESEASGYNTSASSEFGSLEDSHQFVSPVTRHASKRRAVENVDHLDELMKSSMVLSPEKRLRLNTSNDSNLVRNTARSPDSSMNGRPQTRRSTSSDIEISPRVRAMRSTSGSSMDLVRTVSSFCTDSISPKFFTNHGSTTRKRTENGSIYSRHRLGATFSPLVAGAKRKMATPSQSLKRQEKQSPLESRHGGLRSRGTPQRKLLLCDRLKVLN.

2 stretches are compositionally biased toward polar residues: residues 1-21 (MSSQ…SSEF) and 68-102 (LNTS…SSDI). 3 disordered regions span residues 1–39 (MSSQ…RHAS), 63–116 (EKRL…STSG), and 170–205 (GAKR…GTPQ). Residues 183-195 (KRQEKQSPLESRH) show a composition bias toward basic and acidic residues.

This is an uncharacterized protein from Caenorhabditis elegans.